The sequence spans 289 residues: ATP synthase gamma chain (289 aa).

This sequence belongs to the ATPase gamma chain family. F-type ATPases have 2 components, CF(1) - the catalytic core - and CF(0) - the membrane proton channel. CF(1) has five subunits: alpha(3), beta(3), gamma(1), delta(1), epsilon(1). CF(0) has three main subunits: a, b and c.

The protein resides in the cell inner membrane. Functionally, produces ATP from ADP in the presence of a proton gradient across the membrane. The gamma chain is believed to be important in regulating ATPase activity and the flow of protons through the CF(0) complex. The chain is ATP synthase gamma chain from Dichelobacter nodosus (strain VCS1703A).